Consider the following 519-residue polypeptide: T-box transcription factor TBX5 (519 aa).

The interval 1–43 (MADTEEAYGMPDTPVEAEPKELQCEPKQDNQMGASSKTPTSPQ) is disordered. The span at 17 to 28 (AEPKELQCEPKQ) shows a compositional bias: basic and acidic residues. Residues 29–43 (DNQMGASSKTPTSPQ) show a composition bias toward polar residues. The segment at residues 63–238 (LWLKFHEVGT…NNPFAKGFRG (176 aa)) is a DNA-binding region (T-box). Disordered stretches follow at residues 254–312 (EYPV…SAYP) and 335–376 (ELSY…TESA). Polar residues predominate over residues 262–303 (TVRQKVSSNHSPFSQETRNITGSSTLNSQYQCENGVSSTSQD).

As to quaternary structure, monomer. Homodimer (via the T-box); binds DNA as homodimer.

Its subcellular location is the nucleus. It localises to the cytoplasm. Functionally, DNA-binding protein that regulates the transcription of several genes and is involved in heart development and limb pattern formation. May bind to the core DNA motif of promoters. The protein is T-box transcription factor TBX5 (tbx5) of Xenopus tropicalis (Western clawed frog).